Here is a 212-residue protein sequence, read N- to C-terminus: ER lumen protein-retaining receptor 1 (212 aa).

Residues 1–4 (MNLF) lie on the Lumenal side of the membrane. Residues 5–24 (RFLGDLSHLLAIILLLLKIW) traverse the membrane as a helical segment. At 25–32 (KSRSCAGI) the chain is on the cytoplasmic side. A helical membrane pass occupies residues 33 to 52 (SGKSQVLFAVVFTARYLDLF). The interaction with the K-D-E-L motif on target proteins stretch occupies residues 47–48 (RY). Residues 53–58 (TNYISL) are Lumenal-facing. Residues 59 to 79 (YNTCMKVVYIACSFTTVWLIY) form a helical membrane-spanning segment. Over 80-92 (SKFKATYDGNHDT) the chain is Cytoplasmic. A helical membrane pass occupies residues 93 to 110 (FRVEFLVVPTAILAFLVN). The Lumenal portion of the chain corresponds to 111–116 (HDFTPL). Residues 117 to 135 (EILWTFSIYLESVAILPQL) form a helical membrane-spanning segment. Residues 136 to 149 (FMVSKTGEAETITS) lie on the Cytoplasmic side of the membrane. Residues 150–168 (HYLFALGVYRTLYLFNWIW) traverse the membrane as a helical segment. The interval 159 to 169 (RTLYLFNWIWR) is interaction with the K-D-E-L motif on target proteins. The Lumenal segment spans residues 169 to 178 (RYHFEGFFDL). A helical transmembrane segment spans residues 179–199 (IAIVAGLVQTVLYCDFFYLYI). The Cytoplasmic portion of the chain corresponds to 200–212 (TKVLKGKKLSLPA). The interval 204–207 (KGKK) is important for recycling of cargo proteins with the sequence motif K-D-E-L from the Golgi to the endoplasmic reticulum. Serine 209 carries the phosphoserine; by PKA modification.

Belongs to the ERD2 family. As to quaternary structure, upon ligand binding the receptor oligomerizes and interacts with components of the transport machinery such as ARFGAP1 and ARF1. Phosphorylation by PKA at Ser-209 is required for endoplasmic reticulum retention function.

The protein resides in the golgi apparatus membrane. It localises to the cytoplasmic vesicle. It is found in the COPI-coated vesicle membrane. The protein localises to the endoplasmic reticulum membrane. Its subcellular location is the endoplasmic reticulum-Golgi intermediate compartment membrane. Receptor for the C-terminal sequence motif K-D-E-L that is present on endoplasmic reticulum resident proteins and that mediates their recycling from the Golgi back to the endoplasmic reticulum. This is ER lumen protein-retaining receptor 1 (KDELR1) from Homo sapiens (Human).